The chain runs to 101 residues: Urease subunit beta (101 aa).

Belongs to the urease beta subunit family. As to quaternary structure, heterotrimer of UreA (gamma), UreB (beta) and UreC (alpha) subunits. Three heterotrimers associate to form the active enzyme.

It is found in the cytoplasm. The catalysed reaction is urea + 2 H2O + H(+) = hydrogencarbonate + 2 NH4(+). Its pathway is nitrogen metabolism; urea degradation; CO(2) and NH(3) from urea (urease route): step 1/1. This Actinobacillus pleuropneumoniae serotype 7 (strain AP76) protein is Urease subunit beta.